A 50-amino-acid polypeptide reads, in one-letter code: Conotoxin Cal6.19 (50 aa).

The N-terminal stretch at 1–22 (MKVTCVLVLTLMALTVCQVATA) is a signal peptide. Cystine bridges form between C24/C37, C30/C41, and C36/C46.

Expressed by the venom duct.

It localises to the secreted. In terms of biological role, probable neurotoxin. The chain is Conotoxin Cal6.19 from Californiconus californicus (California cone).